The sequence spans 630 residues: ATP-dependent RNA helicase mrh4, mitochondrial (630 aa).

The transit peptide at 1 to 46 (MNRLGGLSLPLRPVCLFCRAQTSLALSPLQGGQAVRSIATGRLRRR) directs the protein to the mitochondrion. The segment at 46-108 (RARMTLSKDV…GETEEKPAMN (63 aa)) is disordered. Residues 167–174 (DAVPTPIQ) carry the Q motif motif. Positions 195-407 (DDDEPQYEQY…RKLYPDIWRL (213 aa)) constitute a Helicase ATP-binding domain. Residue 208 to 215 (AETGSGKT) coordinates ATP. Residues 235-255 (EMEKKEEERKVREREENKKNQ) are compositionally biased toward basic and acidic residues. The tract at residues 235–265 (EMEKKEEERKVREREENKKNQAFDLEPEIPP) is disordered. Positions 354–357 (DEAD) match the DEAD box motif. One can recognise a Helicase C-terminal domain in the interval 452 to 630 (GSDEAGSPWS…VREVWFGLDS (179 aa)).

It belongs to the DEAD box helicase family. MRH4 subfamily.

The protein localises to the mitochondrion. It carries out the reaction ATP + H2O = ADP + phosphate + H(+). Functionally, ATP-binding RNA helicase involved in mitochondrial RNA metabolism. Required for maintenance of mitochondrial DNA. In Emericella nidulans (strain FGSC A4 / ATCC 38163 / CBS 112.46 / NRRL 194 / M139) (Aspergillus nidulans), this protein is ATP-dependent RNA helicase mrh4, mitochondrial (mrh4).